Consider the following 388-residue polypeptide: Succinate--CoA ligase [ADP-forming] subunit beta (388 aa).

Residues 9-244 form the ATP-grasp domain; it reads KQLFAEYGLP…PSQDDPREAH (236 aa). ATP contacts are provided by residues Lys46, 53–55, Glu99, Thr102, and Glu107; that span reads GRG. Mg(2+)-binding residues include Asn199 and Asp213. Residues Asn264 and 321-323 contribute to the substrate site; that span reads GIV.

It belongs to the succinate/malate CoA ligase beta subunit family. Heterotetramer of two alpha and two beta subunits. Requires Mg(2+) as cofactor.

It carries out the reaction succinate + ATP + CoA = succinyl-CoA + ADP + phosphate. The catalysed reaction is GTP + succinate + CoA = succinyl-CoA + GDP + phosphate. It participates in carbohydrate metabolism; tricarboxylic acid cycle; succinate from succinyl-CoA (ligase route): step 1/1. Functionally, succinyl-CoA synthetase functions in the citric acid cycle (TCA), coupling the hydrolysis of succinyl-CoA to the synthesis of either ATP or GTP and thus represents the only step of substrate-level phosphorylation in the TCA. The beta subunit provides nucleotide specificity of the enzyme and binds the substrate succinate, while the binding sites for coenzyme A and phosphate are found in the alpha subunit. In Pseudomonas putida (strain GB-1), this protein is Succinate--CoA ligase [ADP-forming] subunit beta.